Here is a 196-residue protein sequence, read N- to C-terminus: MVAQVQKQAPTFKKTAVVDGVFDEVSLDKYKGKYVVLAFIPLAFTFVCPTEIIAFSEAAKKFEEQGAQVLFASTDSEYSLLAWTNIPRKEGGLGPINIPLLADTNHSLSRDYGVLIEEEGVALRGLFIIDPKGVIRHITINDLPVGRNVDEALRLVEAFQWTDKNGTVLPCNWTPGAATIKPTVEDSKEYFEAANK.

The region spanning 3–161 is the Thioredoxin domain; the sequence is AQVQKQAPTF…ALRLVEAFQW (159 aa). K14 is covalently cross-linked (Glycyl lysine isopeptide (Lys-Gly) (interchain with G-Cter in ubiquitin)). A substrate-binding site is contributed by 45–47; the sequence is TFV. The active-site Cysteine sulfenic acid (-SOH) intermediate is C48. K89 is covalently cross-linked (Glycyl lysine isopeptide (Lys-Gly) (interchain with G-Cter in ubiquitin)). R124 contributes to the substrate binding site. Residue K132 forms a Glycyl lysine isopeptide (Lys-Gly) (interchain with G-Cter in ubiquitin) linkage. T174 is modified (phosphothreonine).

The protein belongs to the peroxiredoxin family. AhpC/Prx1 subfamily. As to quaternary structure, homodimer; disulfide-linked, upon oxidation. Interacts with YAP1 via transient disulfide linkages. Post-translationally, the enzyme can be inactivated by further oxidation of the cysteine sulfenic acid (C(P)-SOH) to sulphinic acid (C(P)-SO2H) instead of its condensation to a disulfide bond. It can be reactivated by forming a transient disulfide bond with sulfiredoxin SRX1, which reduces the cysteine sulfinic acid in an ATP- and Mg-dependent manner.

The protein resides in the cytoplasm. It carries out the reaction a hydroperoxide + [thioredoxin]-dithiol = an alcohol + [thioredoxin]-disulfide + H2O. Its function is as follows. Thiol-specific peroxidase that catalyzes the reduction of hydrogen peroxide and organic hydroperoxides to water and alcohols, respectively. Plays a role in cell protection against oxidative stress by detoxifying peroxides and as sensor of hydrogen peroxide-mediated signaling events. Protects the cell against the oxidative stress caused by nascent-protein misfolding and aggregation. Relays hydrogen peroxide as a signal to the transcription factor YAP1 by inducing the formation of intramolecular disulfide bonds in YAP1, which causes its nuclear accumulation and activation. Can act alternatively as peroxidase and molecular chaperone. Oxidative stress and heat shock exposure cause a reversible shift of the protein structure from low MW species to high MW complexes, triggering a peroxidase-to-chaperone functional switch. The chaperone function of the protein enhances resistance to heat shock. This chain is Peroxiredoxin TSA1, found in Saccharomyces cerevisiae (strain ATCC 204508 / S288c) (Baker's yeast).